We begin with the raw amino-acid sequence, 151 residues long: Deoxyuridine 5'-triphosphate nucleotidohydrolase (151 aa).

Substrate is bound by residues 70–72 (RSG), asparagine 83, 87–89 (LID), and methionine 97.

It belongs to the dUTPase family. Requires Mg(2+) as cofactor.

It catalyses the reaction dUTP + H2O = dUMP + diphosphate + H(+). It participates in pyrimidine metabolism; dUMP biosynthesis; dUMP from dCTP (dUTP route): step 2/2. In terms of biological role, this enzyme is involved in nucleotide metabolism: it produces dUMP, the immediate precursor of thymidine nucleotides and it decreases the intracellular concentration of dUTP so that uracil cannot be incorporated into DNA. In Histophilus somni (strain 129Pt) (Haemophilus somnus), this protein is Deoxyuridine 5'-triphosphate nucleotidohydrolase.